The chain runs to 335 residues: Biotin synthase (335 aa).

A Radical SAM core domain is found at 46-274 (YDIQLASLFS…ESKIRLSAGR (229 aa)). [4Fe-4S] cluster contacts are provided by Cys-61, Cys-65, and Cys-68. Positions 105, 137, 197, and 269 each coordinate [2Fe-2S] cluster.

The protein belongs to the radical SAM superfamily. Biotin synthase family. Homodimer. [4Fe-4S] cluster serves as cofactor. [2Fe-2S] cluster is required as a cofactor.

It carries out the reaction (4R,5S)-dethiobiotin + (sulfur carrier)-SH + 2 reduced [2Fe-2S]-[ferredoxin] + 2 S-adenosyl-L-methionine = (sulfur carrier)-H + biotin + 2 5'-deoxyadenosine + 2 L-methionine + 2 oxidized [2Fe-2S]-[ferredoxin]. It participates in cofactor biosynthesis; biotin biosynthesis; biotin from 7,8-diaminononanoate: step 2/2. Catalyzes the conversion of dethiobiotin (DTB) to biotin by the insertion of a sulfur atom into dethiobiotin via a radical-based mechanism. This chain is Biotin synthase, found in Prochlorococcus marinus (strain MIT 9301).